The following is a 396-amino-acid chain: Stearoyl-[acyl-carrier-protein] 9-desaturase 5, chloroplastic (396 aa).

A chloroplast-targeting transit peptide spans 1-29; sequence MAMAMDRIVFSPSSYVYRPCQARGSRSSR. Residues E137, E175, H178, E228, E261, and H264 each coordinate Fe cation.

It belongs to the fatty acid desaturase type 2 family. As to quaternary structure, homodimer. It depends on Fe(2+) as a cofactor. In terms of tissue distribution, ubiquitously expressed with a preference in leaves, flowers and stems.

The protein localises to the plastid. Its subcellular location is the chloroplast stroma. It catalyses the reaction octadecanoyl-[ACP] + 2 reduced [2Fe-2S]-[ferredoxin] + O2 + 2 H(+) = (9Z)-octadecenoyl-[ACP] + 2 oxidized [2Fe-2S]-[ferredoxin] + 2 H2O. The protein operates within lipid metabolism; fatty acid metabolism. Functionally, converts stearoyl-ACP to oleoyl-ACP by introduction of a cis double bond between carbons 9 and 10 of the acyl chain. The chain is Stearoyl-[acyl-carrier-protein] 9-desaturase 5, chloroplastic (S-ACP-DES5) from Arabidopsis thaliana (Mouse-ear cress).